A 138-amino-acid polypeptide reads, in one-letter code: MKPSPRRKARELAVQAVYSWQVSKNPVNDIEVNFIADNSKRRFDIEYFQLLLRGVTTNIGSIDEAIIPYVDRPLDDIDQVEKAILRVAVFELKDCTDVPYRVVINEAIELAKSFAADDSHKFVNGVLDKTVKLIRPQE.

The protein belongs to the NusB family.

Involved in transcription antitermination. Required for transcription of ribosomal RNA (rRNA) genes. Binds specifically to the boxA antiterminator sequence of the ribosomal RNA (rrn) operons. The chain is Transcription antitermination protein NusB from Colwellia psychrerythraea (strain 34H / ATCC BAA-681) (Vibrio psychroerythus).